The following is a 70-amino-acid chain: Putative venom toxin Ts29 (70 aa).

Residues 1-20 (MSPLFVVLLIATTTFYHSDA) form the signal peptide.

As to expression, expressed by the venom gland.

Its subcellular location is the secreted. In Tityus serrulatus (Brazilian scorpion), this protein is Putative venom toxin Ts29.